We begin with the raw amino-acid sequence, 783 residues long: MLPVASGTRGSTQDLFQVGLAPPGNAKDILLLYEEDAEEWALYLREIFMRVVEREAILLYPLHSFSSSHLEMLNFYAYKCKLLIISNSLLKDLTPKKCQFLEKILHSTGNVVTLLCGMESSDPFYQLLSIPRKRWEISTEQDPDGYISVIRQILDQGPEDYLEVSIPTDSRAKYPEDTSGQKGTDVLASLRPSVPRVLVLPGEIPCEKPGEIFILLKDELIGEILEVEFISTNKRLRARPARWNKSVWHMKAADFPAGSVTVNIHCDGIIKATTEIKYCSAAKATESPFRVSDPGKSLCQKSIEELDNVLASIFKREIPYYEFKHLQAETYPQKERTHTTELPTLLHCAAKFGLKNLALHLLQCSGATRAARMKATDGSDLLHIAERHGHEELKEVFEDFLSQNTGRNSKQENDYEEDVISFSTYSPSMPSPASLHELRKTHRRNTDRSEEPERSVEMKEEEAGAEARRSLSEGERESSENQYDDLYVFIPGFDTEGNSEEPLPHCRPPLLPPRPGTAASQLERPHFTSQGKVLEDQMERSQNWNDLNARPETREESSREEKKEEAQEEEEEEENPYAFAETEDNEYDLILASKSVKKRTGNRSFIINRPPAPTPRPTHIPPKEETTPYIAQVFQQKAARRQSDGDKFYSLPKKPDKTRMEGPTFPSTRDYLTTGQEELILLQERVKNGKMSVDEALEKFKHWQMGKSGLEMIQQEKLRQLRDNIIGKRPEDENAYDKLTIVHHPSGNTAHNENMLYNSPFNSKFPARIQVEKEFGFCCKKDH.

Positions methionine 1–leucine 154 are interaction with ITPR2. In terms of domain architecture, TIR spans asparagine 25 to isoleucine 153. Positions valine 199 to leucine 326 constitute a DBB domain. 2 ANK repeats span residues glutamate 341 to alanine 370 and aspartate 377 to arginine 407. 4 disordered regions span residues phenylalanine 422 to glutamine 521, methionine 538 to glutamate 586, serine 604 to glutamate 624, and arginine 641 to aspartate 670. Basic and acidic residues predominate over residues arginine 444 to serine 479. The segment covering histidine 505–proline 515 has biased composition (pro residues). A compositionally biased stretch (basic and acidic residues) spans alanine 549–glutamate 565. Positions alanine 566–glutamate 586 are enriched in acidic residues. Positions proline 610 to isoleucine 620 are enriched in pro residues. Basic and acidic residues predominate over residues arginine 641–methionine 660. At tyrosine 649 the chain carries Phosphotyrosine.

As to quaternary structure, interacts with LYN, ITPR1 and ITPR2. Post-translationally, phosphorylated on tyrosines upon BCR activation. In terms of tissue distribution, specifically expressed in spleen. Highly expressed in immature B-cells and recirculating B-cells, and at low levels in pro-B and pre-B cells.

Involved in B-cell receptor (BCR)-induced Ca(2+) mobilization from intracellular stores. Promotes Lyn-mediated phosphorylation of IP3 receptors 1 and 2. In Mus musculus (Mouse), this protein is B-cell scaffold protein with ankyrin repeats (Bank1).